Reading from the N-terminus, the 141-residue chain is NADH dehydrogenase [ubiquinone] 1 alpha subcomplex subunit 11 (141 aa).

A2 bears the N-acetylalanine mark. Helical transmembrane passes span 21 to 43 (KAYITTALGGLCGLISSAYSITH) and 58 to 80 (RFTFTAAAIGAMFGLTTCVSAQV).

This sequence belongs to the complex I NDUFA11 subunit family. In terms of assembly, complex I is composed of 45 different subunits.

The protein localises to the mitochondrion inner membrane. Its function is as follows. Accessory subunit of the mitochondrial membrane respiratory chain NADH dehydrogenase (Complex I), that is believed not to be involved in catalysis. Complex I functions in the transfer of electrons from NADH to the respiratory chain. The immediate electron acceptor for the enzyme is believed to be ubiquinone. The chain is NADH dehydrogenase [ubiquinone] 1 alpha subcomplex subunit 11 (Ndufa11) from Rattus norvegicus (Rat).